A 252-amino-acid polypeptide reads, in one-letter code: Phosphate import ATP-binding protein PstB 1 (252 aa).

Residues 6–247 form the ABC transporter domain; it reads LQVSDLSVYY…PKHKETEDYI (242 aa). 38–45 provides a ligand contact to ATP; sequence GPSGSGKS.

The protein belongs to the ABC transporter superfamily. Phosphate importer (TC 3.A.1.7) family. The complex is composed of two ATP-binding proteins (PstB), two transmembrane proteins (PstC and PstA) and a solute-binding protein (PstS).

It localises to the cell membrane. The enzyme catalyses phosphate(out) + ATP + H2O = ADP + 2 phosphate(in) + H(+). Functionally, part of the ABC transporter complex PstSACB involved in phosphate import. Responsible for energy coupling to the transport system. This Streptococcus agalactiae serotype Ia (strain ATCC 27591 / A909 / CDC SS700) protein is Phosphate import ATP-binding protein PstB 1.